Reading from the N-terminus, the 501-residue chain is Lysine--tRNA ligase (501 aa).

Residues Glu-404 and Glu-411 each contribute to the Mg(2+) site.

Belongs to the class-II aminoacyl-tRNA synthetase family. Homodimer. Requires Mg(2+) as cofactor.

Its subcellular location is the cytoplasm. It carries out the reaction tRNA(Lys) + L-lysine + ATP = L-lysyl-tRNA(Lys) + AMP + diphosphate. This Campylobacter jejuni subsp. doylei (strain ATCC BAA-1458 / RM4099 / 269.97) protein is Lysine--tRNA ligase.